Consider the following 382-residue polypeptide: uncharacterized protein (382 aa).

The next 12 membrane-spanning stretches (helical) occupy residues 8 to 28 (VMLL…LNTL), 45 to 65 (MVSS…GYLI), 75 to 95 (YLAS…VGFW), 102 to 122 (FIAG…LMCS), 131 to 151 (LLAA…LLVS), 157 to 177 (LLHV…PLLF), 204 to 224 (LGVN…GLMP), 231 to 251 (GMAN…GILG), 270 to 290 (VQVF…AMAP), 291 to 311 (ALFI…AWAC), 325 to 345 (ALLL…AMLM), and 349 to 369 (SDNL…LMLL).

This sequence belongs to the major facilitator superfamily. YcaD (TC 2.A.1.26) family.

It localises to the cell inner membrane. This is an uncharacterized protein from Salmonella dublin (strain CT_02021853).